We begin with the raw amino-acid sequence, 374 residues long: MSKRDYYEVLGVSKDVSPQELKKAYRKVAMKYHPDRNSDDPNSEDKFKEASEAYEVLSDAQKRAAYDQYGHAGVDGNAGMGGGAGAGNFSDIFGDVFGDIFGGGGGRRRGGPSRGSDLRYTLDLSLEDAVKGTTVKIRVPTLVSCKPCGGSGAKPGTSPQTCTTCGGHGQVRMQQGFFSVQQTCPNCRGQGKMITDPCKECHGHGRVEETKTLSVKVPPGVDTGDRIRLAGEGEAGADGGPAGDLYVQVDVQDHAFFQREGRNLYCEVPISLFDACLGGELEVPTLDGRVKLKIPAETQTGKLFRLRGKGVTPVRGGAAGDLMCRVIIETPVNLTKKQKELLEELKASMKGEKNSPKQESWFEGMKNFFGDLKM.

The J domain maps to 5–70 (DYYEVLGVSK…QKRAAYDQYG (66 aa)). The segment at 132–210 (GTTVKIRVPT…CHGHGRVEET (79 aa)) adopts a CR-type zinc-finger fold. The Zn(2+) site is built by Cys-145, Cys-148, Cys-162, Cys-165, Cys-184, Cys-187, Cys-198, and Cys-201. CXXCXGXG motif repeat units follow at residues 145–152 (CKPCGGSG), 162–169 (CTTCGGHG), 184–191 (CPNCRGQG), and 198–205 (CKECHGHG).

This sequence belongs to the DnaJ family. In terms of assembly, homodimer. Zn(2+) is required as a cofactor.

It localises to the cytoplasm. Participates actively in the response to hyperosmotic and heat shock by preventing the aggregation of stress-denatured proteins and by disaggregating proteins, also in an autonomous, DnaK-independent fashion. Unfolded proteins bind initially to DnaJ; upon interaction with the DnaJ-bound protein, DnaK hydrolyzes its bound ATP, resulting in the formation of a stable complex. GrpE releases ADP from DnaK; ATP binding to DnaK triggers the release of the substrate protein, thus completing the reaction cycle. Several rounds of ATP-dependent interactions between DnaJ, DnaK and GrpE are required for fully efficient folding. Also involved, together with DnaK and GrpE, in the DNA replication of plasmids through activation of initiation proteins. This chain is Chaperone protein DnaJ, found in Saccharophagus degradans (strain 2-40 / ATCC 43961 / DSM 17024).